A 184-amino-acid chain; its full sequence is Photosystem I assembly protein Ycf4 (184 aa).

Helical transmembrane passes span 22–42 and 57–77; these read FCWA…GTSS and IIFF…LFIS.

The protein belongs to the Ycf4 family.

The protein resides in the plastid. The protein localises to the chloroplast thylakoid membrane. Functionally, seems to be required for the assembly of the photosystem I complex. In Olimarabidopsis pumila (Dwarf rocket), this protein is Photosystem I assembly protein Ycf4.